The primary structure comprises 188 residues: Molybdopterin synthase catalytic subunit (188 aa).

Positions 1-14 (MTTQPPQDQTSTTP) are enriched in low complexity. A disordered region spans residues 1-23 (MTTQPPQDQTSTTPSLPPHLDPT). Residues 134-135 (HR), Lys-150, and 157-159 (KRE) contribute to the substrate site.

This sequence belongs to the MoaE family. MOCS2B subfamily. In terms of assembly, heterotetramer; composed of 2 small (MOCS2A) and 2 large (MOCS2B) subunits.

It localises to the cytoplasm. The enzyme catalyses 2 [molybdopterin-synthase sulfur-carrier protein]-C-terminal-Gly-aminoethanethioate + cyclic pyranopterin phosphate + H2O = molybdopterin + 2 [molybdopterin-synthase sulfur-carrier protein]-C-terminal Gly-Gly + 2 H(+). Its pathway is cofactor biosynthesis; molybdopterin biosynthesis. Functionally, catalytic subunit of the molybdopterin synthase complex, a complex that catalyzes the conversion of precursor Z into molybdopterin. Acts by mediating the incorporation of 2 sulfur atoms from thiocarboxylated MOCS2A into precursor Z to generate a dithiolene group. The polypeptide is Molybdopterin synthase catalytic subunit (Neosartorya fischeri (strain ATCC 1020 / DSM 3700 / CBS 544.65 / FGSC A1164 / JCM 1740 / NRRL 181 / WB 181) (Aspergillus fischerianus)).